We begin with the raw amino-acid sequence, 470 residues long: Cysteine--tRNA ligase (470 aa).

Cys28 serves as a coordination point for Zn(2+). The short motif at 30–40 is the 'HIGH' region element; that stretch reads PTVYNYIHIGN. Zn(2+) contacts are provided by Cys212, His237, and Glu241. The 'KMSKS' region signature appears at 271 to 275; sequence KMSKS. Residue Lys274 participates in ATP binding.

It belongs to the class-I aminoacyl-tRNA synthetase family. In terms of assembly, monomer. Requires Zn(2+) as cofactor.

The protein resides in the cytoplasm. The catalysed reaction is tRNA(Cys) + L-cysteine + ATP = L-cysteinyl-tRNA(Cys) + AMP + diphosphate. This Ligilactobacillus salivarius (strain UCC118) (Lactobacillus salivarius) protein is Cysteine--tRNA ligase.